Here is a 221-residue protein sequence, read N- to C-terminus: Protein-L-isoaspartate O-methyltransferase (221 aa).

The active site involves Ser-70.

Belongs to the methyltransferase superfamily. L-isoaspartyl/D-aspartyl protein methyltransferase family.

The protein localises to the cytoplasm. The catalysed reaction is [protein]-L-isoaspartate + S-adenosyl-L-methionine = [protein]-L-isoaspartate alpha-methyl ester + S-adenosyl-L-homocysteine. Functionally, catalyzes the methyl esterification of L-isoaspartyl residues in peptides and proteins that result from spontaneous decomposition of normal L-aspartyl and L-asparaginyl residues. It plays a role in the repair and/or degradation of damaged proteins. The protein is Protein-L-isoaspartate O-methyltransferase of Alkalilimnicola ehrlichii (strain ATCC BAA-1101 / DSM 17681 / MLHE-1).